The chain runs to 505 residues: Elsinochrome transporter 1 (505 aa).

Positions 1–10 (MALSGLGSGP) are enriched in gly residues. Residues 1–25 (MALSGLGSGPEGNPNNHQGKAIPTL) form a disordered region. Residues 35–55 (FLFSWVSFLVPFWSWYPFSPL) traverse the membrane as a helical segment. N-linked (GlcNAc...) asparagine glycosylation is found at Asn-64 and Asn-80. A disordered region spans residues 221-295 (DTPTGAGKPP…TEKGESLPLT (75 aa)). The span at 255 to 267 (TPSSPDRSSSTNS) shows a compositional bias: low complexity. The next 6 helical transmembrane spans lie at 313–333 (VIFS…FGAE), 348–368 (LGLG…LNIV), 391–411 (KALL…IGLA), 417–437 (ATLV…ANGL), 449–469 (VVSG…AIVF), and 479–499 (VFWI…WIKP).

This sequence belongs to the major facilitator superfamily. Nitrate/nitrite porter (TC 2.A.1.8) family.

The protein resides in the cell membrane. Major facilitator-type transporter; part of the gene cluster that mediates the biosynthesis of elsinochromes, pigments consisting of at least four interconvertible tautomers (A, B, C and D) that have a core phenolic quinone to which various side chains are attached and which play an important role in fungal pathogenesis. Once elsinochrome is synthesized, it must be exported outside the fungal cells, which is probably accomplished by the ECT1 transporter, to avoid toxicity. This chain is Elsinochrome transporter 1, found in Elsinoe fawcettii (Citrus scab fungus).